Consider the following 180-residue polypeptide: ATP-dependent protease subunit HslV (180 aa).

Thr-5 is a catalytic residue. Na(+)-binding residues include Gly-161, Cys-164, and Thr-167.

It belongs to the peptidase T1B family. HslV subfamily. In terms of assembly, a double ring-shaped homohexamer of HslV is capped on each side by a ring-shaped HslU homohexamer. The assembly of the HslU/HslV complex is dependent on binding of ATP.

The protein localises to the cytoplasm. The enzyme catalyses ATP-dependent cleavage of peptide bonds with broad specificity.. Allosterically activated by HslU binding. Its function is as follows. Protease subunit of a proteasome-like degradation complex believed to be a general protein degrading machinery. The polypeptide is ATP-dependent protease subunit HslV (Campylobacter jejuni subsp. jejuni serotype O:6 (strain 81116 / NCTC 11828)).